Consider the following 209-residue polypeptide: Thiamine-phosphate synthase (209 aa).

4-amino-2-methyl-5-(diphosphooxymethyl)pyrimidine is bound by residues 36–40 (QYRDK) and N68. 2 residues coordinate Mg(2+): D69 and D87. A 4-amino-2-methyl-5-(diphosphooxymethyl)pyrimidine-binding site is contributed by T106. Residue 133–135 (SST) coordinates 2-[(2R,5Z)-2-carboxy-4-methylthiazol-5(2H)-ylidene]ethyl phosphate. K136 lines the 4-amino-2-methyl-5-(diphosphooxymethyl)pyrimidine pocket. G163 lines the 2-[(2R,5Z)-2-carboxy-4-methylthiazol-5(2H)-ylidene]ethyl phosphate pocket.

The protein belongs to the thiamine-phosphate synthase family. It depends on Mg(2+) as a cofactor.

The catalysed reaction is 2-[(2R,5Z)-2-carboxy-4-methylthiazol-5(2H)-ylidene]ethyl phosphate + 4-amino-2-methyl-5-(diphosphooxymethyl)pyrimidine + 2 H(+) = thiamine phosphate + CO2 + diphosphate. The enzyme catalyses 2-(2-carboxy-4-methylthiazol-5-yl)ethyl phosphate + 4-amino-2-methyl-5-(diphosphooxymethyl)pyrimidine + 2 H(+) = thiamine phosphate + CO2 + diphosphate. It carries out the reaction 4-methyl-5-(2-phosphooxyethyl)-thiazole + 4-amino-2-methyl-5-(diphosphooxymethyl)pyrimidine + H(+) = thiamine phosphate + diphosphate. The protein operates within cofactor biosynthesis; thiamine diphosphate biosynthesis; thiamine phosphate from 4-amino-2-methyl-5-diphosphomethylpyrimidine and 4-methyl-5-(2-phosphoethyl)-thiazole: step 1/1. In terms of biological role, condenses 4-methyl-5-(beta-hydroxyethyl)thiazole monophosphate (THZ-P) and 2-methyl-4-amino-5-hydroxymethyl pyrimidine pyrophosphate (HMP-PP) to form thiamine monophosphate (TMP). The polypeptide is Thiamine-phosphate synthase (Pseudomonas paraeruginosa (strain DSM 24068 / PA7) (Pseudomonas aeruginosa (strain PA7))).